We begin with the raw amino-acid sequence, 193 residues long: Acyl carrier protein phosphodiesterase (193 aa).

This sequence belongs to the AcpH family.

The enzyme catalyses holo-[ACP] + H2O = apo-[ACP] + (R)-4'-phosphopantetheine + H(+). In terms of biological role, converts holo-ACP to apo-ACP by hydrolytic cleavage of the phosphopantetheine prosthetic group from ACP. The sequence is that of Acyl carrier protein phosphodiesterase from Enterobacter sp. (strain 638).